The chain runs to 427 residues: Protein TolB homolog (427 aa).

The first 20 residues, 1–20 (MLRRIFVSTFLVFGIVSLYA), serve as a signal peptide directing secretion.

Belongs to the TolB family.

It localises to the periplasm. The sequence is that of Protein TolB homolog from Chlamydia caviae (strain ATCC VR-813 / DSM 19441 / 03DC25 / GPIC) (Chlamydophila caviae).